We begin with the raw amino-acid sequence, 553 residues long: uncharacterized protein (553 aa).

A run of 2 helical transmembrane segments spans residues 6-26 (IKIF…QVDA) and 524-544 (SYWI…GYVF).

The protein to M.jannaschii MJ0795 and MJ1506.

It localises to the cell membrane. This is an uncharacterized protein from Methanocaldococcus jannaschii (strain ATCC 43067 / DSM 2661 / JAL-1 / JCM 10045 / NBRC 100440) (Methanococcus jannaschii).